A 56-amino-acid chain; its full sequence is Small ribosomal subunit protein uS14 (56 aa).

Cys-21, Cys-24, Cys-39, and Cys-42 together coordinate Zn(2+).

The protein belongs to the universal ribosomal protein uS14 family. Requires Zn(2+) as cofactor.

This Debaryomyces hansenii (strain ATCC 36239 / CBS 767 / BCRC 21394 / JCM 1990 / NBRC 0083 / IGC 2968) (Yeast) protein is Small ribosomal subunit protein uS14 (RPS29).